We begin with the raw amino-acid sequence, 329 residues long: GTPase Obg (329 aa).

An Obg domain is found at 1–159; it reads MQFIDEAKIF…MWVWLHLKLL (159 aa). In terms of domain architecture, OBG-type G spans 160–327; it reads SDVGLVGLPN…LLANILSELQ (168 aa). GTP is bound by residues 166 to 173, 191 to 195, 212 to 215, 279 to 282, and 308 to 310; these read GLPNAGKS, FTTLT, DIPG, TKTD, and SSY. Mg(2+) contacts are provided by Ser-173 and Thr-193.

It belongs to the TRAFAC class OBG-HflX-like GTPase superfamily. OBG GTPase family. Monomer. Mg(2+) is required as a cofactor.

The protein localises to the cytoplasm. Its function is as follows. An essential GTPase which binds GTP, GDP and possibly (p)ppGpp with moderate affinity, with high nucleotide exchange rates and a fairly low GTP hydrolysis rate. Plays a role in control of the cell cycle, stress response, ribosome biogenesis and in those bacteria that undergo differentiation, in morphogenesis control. The chain is GTPase Obg from Orientia tsutsugamushi (strain Ikeda) (Rickettsia tsutsugamushi).